Reading from the N-terminus, the 302-residue chain is D-alanine--D-alanine ligase (302 aa).

Positions 99–298 (KRLFVAEGIP…FEQLIQRIID (200 aa)) constitute an ATP-grasp domain. Position 128–183 (128–183 (LAALGSPVVVKPADGGSTVGVTIAREAGHLPEAVRLALQYSPQVLIEQYIPGQEIT)) interacts with ATP. Residues Asp-252, Glu-265, and Asn-267 each contribute to the Mg(2+) site.

Belongs to the D-alanine--D-alanine ligase family. It depends on Mg(2+) as a cofactor. Requires Mn(2+) as cofactor.

The protein localises to the cytoplasm. It catalyses the reaction 2 D-alanine + ATP = D-alanyl-D-alanine + ADP + phosphate + H(+). The protein operates within cell wall biogenesis; peptidoglycan biosynthesis. In terms of biological role, cell wall formation. In Gloeobacter violaceus (strain ATCC 29082 / PCC 7421), this protein is D-alanine--D-alanine ligase.